Consider the following 83-residue polypeptide: uncharacterized protein (83 aa).

Transmembrane regions (helical) follow at residues 23–43 (GGCYFAFMGVAWVLLAISAIA) and 49–69 (SLWWDIWSLGLLVLIPAVVYG).

Its subcellular location is the cell membrane. This is an uncharacterized protein from Mycobacterium tuberculosis (strain CDC 1551 / Oshkosh).